A 194-amino-acid chain; its full sequence is Phosphoheptose isomerase (194 aa).

The region spanning 37-194 (ISNSFKQGGK…LIEFEMAKQA (158 aa)) is the SIS domain. 52-54 (NGG) contributes to the substrate binding site. 2 residues coordinate Zn(2+): H61 and E65. Substrate is bound by residues E65, 93–94 (ND), 119–121 (STS), S124, and Q172. The Zn(2+) site is built by Q172 and H180.

This sequence belongs to the SIS family. GmhA subfamily. As to quaternary structure, homotetramer. Requires Zn(2+) as cofactor.

The protein resides in the cytoplasm. The catalysed reaction is 2 D-sedoheptulose 7-phosphate = D-glycero-alpha-D-manno-heptose 7-phosphate + D-glycero-beta-D-manno-heptose 7-phosphate. It participates in carbohydrate biosynthesis; D-glycero-D-manno-heptose 7-phosphate biosynthesis; D-glycero-alpha-D-manno-heptose 7-phosphate and D-glycero-beta-D-manno-heptose 7-phosphate from sedoheptulose 7-phosphate: step 1/1. In terms of biological role, catalyzes the isomerization of sedoheptulose 7-phosphate in D-glycero-D-manno-heptose 7-phosphate. In Haemophilus influenzae (strain PittGG), this protein is Phosphoheptose isomerase.